The following is a 347-amino-acid chain: N-acetyl-gamma-glutamyl-phosphate reductase (347 aa).

Cysteine 151 is a catalytic residue.

It belongs to the NAGSA dehydrogenase family. Type 1 subfamily.

The protein localises to the cytoplasm. It carries out the reaction N-acetyl-L-glutamate 5-semialdehyde + phosphate + NADP(+) = N-acetyl-L-glutamyl 5-phosphate + NADPH + H(+). It participates in amino-acid biosynthesis; L-arginine biosynthesis; N(2)-acetyl-L-ornithine from L-glutamate: step 3/4. Functionally, catalyzes the NADPH-dependent reduction of N-acetyl-5-glutamyl phosphate to yield N-acetyl-L-glutamate 5-semialdehyde. This Corynebacterium diphtheriae (strain ATCC 700971 / NCTC 13129 / Biotype gravis) protein is N-acetyl-gamma-glutamyl-phosphate reductase.